Consider the following 89-residue polypeptide: MSLSVEAKAKIVADFGRDANDTGSSEVQVALLTAQINHLQGHFSEHKKDHHSRRGLLRMVSTRRKLLDYLKRKDVASYVSLIERLGLRR.

This sequence belongs to the universal ribosomal protein uS15 family. In terms of assembly, part of the 30S ribosomal subunit. Forms a bridge to the 50S subunit in the 70S ribosome, contacting the 23S rRNA.

One of the primary rRNA binding proteins, it binds directly to 16S rRNA where it helps nucleate assembly of the platform of the 30S subunit by binding and bridging several RNA helices of the 16S rRNA. Functionally, forms an intersubunit bridge (bridge B4) with the 23S rRNA of the 50S subunit in the ribosome. The sequence is that of Small ribosomal subunit protein uS15 from Yersinia enterocolitica serotype O:8 / biotype 1B (strain NCTC 13174 / 8081).